The sequence spans 488 residues: Transmembrane protein 39A (488 aa).

N-linked (GlcNAc...) asparagine glycans are attached at residues Asn31 and Asn39. 8 consecutive transmembrane segments (helical) span residues 72–92 (SLLF…IQYI), 110–130 (TSLN…VMLA), 154–174 (VLIS…CWTL), 182–202 (SVLN…LCCF), 287–307 (EVLF…LCFV), 319–339 (CEHL…QLLP), 420–440 (LLNL…YSLL), and 446–466 (NHTL…FKLL).

The protein belongs to the TMEM39 family. Interacts with SACM1L, SEC23A and SEC24A.

It localises to the endoplasmic reticulum membrane. Functionally, regulates autophagy by controlling the spatial distribution and levels of the intracellular phosphatidylinositol 4-phosphate (PtdIns(4)P) pools. Modulates (PtdIns(4)P) levels by regulating the ER-to-Golgi trafficking of the phosphatidylinositide phosphatase SACM1L. The polypeptide is Transmembrane protein 39A (TMEM39A) (Bos taurus (Bovine)).